The sequence spans 1407 residues: ABC transporter B family member 6 (1407 aa).

The tract at residues 18–65 (LTPVSEVSEPPESPSPYLDPGAEHGGTGTAAQADDEEEMEEPEEMEPP) is disordered. A compositionally biased stretch (acidic residues) spans 50-63 (ADDEEEMEEPEEME). A run of 4 helical transmembrane segments spans residues 84–104 (VLMVFGSVAAAAHGTALIVYL), 139–159 (IVYIAGGVFISGWIEVSCWIL), 212–231 (VGNYIHNMATFISGLIIGFV), and 236–258 (IALITLATGPFIVAAGGISNIFL). Positions 86-379 (MVFGSVAAAA…AATNFYSFDQ (294 aa)) constitute an ABC transmembrane type-1 1 domain. N291 is a glycosylation site (N-linked (GlcNAc...) asparagine). Helical transmembrane passes span 310-330 (GILISLVQGLGLGFTYGLAIC) and 351-371 (GEIITALFAVILSGLGLNQAA). One can recognise an ABC transporter 1 domain in the interval 412-647 (IEFRNVYFSY…GNLYAELLKC (236 aa)). 447-454 (GRNGSGKS) is an ATP binding site. Residues N449 and N663 are each glycosylated (N-linked (GlcNAc...) asparagine). 2 disordered regions span residues 670-696 (AERDSSAGRGFQEPSSPKMAKSPSLQR) and 709-815 (NSEE…DGQH). Residue N727 is glycosylated (N-linked (GlcNAc...) asparagine). Residues 733–755 (VGEKEPTIKRQDSFEMRLPELPK) show a composition bias toward basic and acidic residues. The segment covering 761-770 (PQRQKSNGSD) has biased composition (polar residues). The N-linked (GlcNAc...) asparagine glycan is linked to N767. Positions 835 to 1123 (AVLGSIGAAI…PFGLAPYILK (289 aa)) constitute an ABC transmembrane type-1 2 domain. The next 6 membrane-spanning stretches (helical) occupy residues 840-860 (IGAAIFGSFNPLLAYVIALVV), 880-900 (LIIACMGIVTVVANFLQHFYF), 958-978 (IFIQDSFAVIVAILIGLLLGW), 982-1002 (LVALATLPVLTLSAIAQKLWL), 1061-1081 (IGFAFGFSQFLLFACNALLLW), and 1102-1122 (MVFSFATFALVEPFGLAPYIL). The region spanning 1158–1395 (IELKNIDFCY…NGLYVRLMQP (238 aa)) is the ABC transporter 2 domain. A glycan (N-linked (GlcNAc...) asparagine) is linked at N1178. An ATP-binding site is contributed by 1193 to 1200 (GVSGSGKS). N-linked (GlcNAc...) asparagine glycosylation is found at N1260 and N1346.

Belongs to the ABC transporter superfamily. ABCB family. Multidrug resistance exporter (TC 3.A.1.201) subfamily. As to expression, expressed in aerial tissues.

The protein resides in the membrane. It carries out the reaction (indol-3-yl)acetate(in) + ATP + H2O = (indol-3-yl)acetate(out) + ADP + phosphate + H(+). Its function is as follows. Probable auxin efflux transporter that contributes, together with ABCB20 and in a FKBP42/TWD1-dependent manner, to the regulation of leaf position and morphology, internode distribution, roots development, and inflorescence organization, probably by modulating auxin repartition. This Arabidopsis thaliana (Mouse-ear cress) protein is ABC transporter B family member 6.